Consider the following 1224-residue polypeptide: Coatomer subunit alpha (1224 aa).

4 WD repeats span residues 7–37 (TKSA…QLWD), 49–79 (EHDG…KVWN), 91–121 (GHLD…RVWN), and 133–163 (GHNH…RVWD). Position 173 is a phosphoserine (S173). The residue at position 185 (T185) is a Phosphothreonine. WD repeat units follow at residues 203–233 (GHDR…KIWR) and 247–277 (GHYN…RVWD). T591 is modified (phosphothreonine). At R965 the chain carries Omega-N-methylarginine. At S1193 the chain carries Phosphoserine.

Oligomeric complex that consists of at least the alpha, beta, beta', gamma, delta, epsilon and zeta subunits. Interacts with SCYL1. Interacts with JAGN1. Interacts with TMEM41B. Interacts with SVEP1. Probably interacts with PEX11A.

The protein resides in the cytoplasm. It localises to the golgi apparatus membrane. Its subcellular location is the cytoplasmic vesicle. The protein localises to the COPI-coated vesicle membrane. It is found in the secreted. Functionally, the coatomer is a cytosolic protein complex that binds to dilysine motifs and reversibly associates with Golgi non-clathrin-coated vesicles, which further mediate biosynthetic protein transport from the ER, via the Golgi up to the trans Golgi network. Coatomer complex is required for budding from Golgi membranes, and is essential for the retrograde Golgi-to-ER transport of dilysine-tagged proteins. In mammals, the coatomer can only be recruited by membranes associated to ADP-ribosylation factors (ARFs), which are small GTP-binding proteins; the complex also influences the Golgi structural integrity, as well as the processing, activity, and endocytic recycling of LDL receptors. Its function is as follows. Xenin stimulates exocrine pancreatic secretion. It inhibits pentagastrin-stimulated secretion of acid, to induce exocrine pancreatic secretion and to affect small and large intestinal motility. In the gut, xenin interacts with the neurotensin receptor. This chain is Coatomer subunit alpha (COPA), found in Bos taurus (Bovine).